The chain runs to 102 residues: uncharacterized protein (102 aa).

A helical membrane pass occupies residues Thr27–Phe47.

The protein localises to the membrane. This is an uncharacterized protein from Saccharomyces cerevisiae (strain ATCC 204508 / S288c) (Baker's yeast).